Here is a 304-residue protein sequence, read N- to C-terminus: uncharacterized protein (304 aa).

The N-terminal stretch at 1–22 is a signal peptide; sequence MKKSLTLLILLLCSLLFSTVLS. The disordered stretch occupies residues 91-111; it reads PAPAPTPESSDPDEPMKPDDS. N-linked (GlcNAc...) asparagine glycosylation is found at Asn-133, Asn-160, Asn-183, and Asn-233. Ser-282 is lipidated: GPI-anchor amidated serine. A propeptide spans 283–304 (removed in mature form); sequence SSHLFGVLPFLPLVLCIFLFLL.

It localises to the cell membrane. This is an uncharacterized protein from Arabidopsis thaliana (Mouse-ear cress).